The chain runs to 560 residues: Oxygen-dependent choline dehydrogenase (560 aa).

8-37 (DYIIIGAGSAGNVLATRLTEDADVSVLLLE) provides a ligand contact to FAD. Residue histidine 475 is the Proton acceptor of the active site.

This sequence belongs to the GMC oxidoreductase family. FAD is required as a cofactor.

The enzyme catalyses choline + A = betaine aldehyde + AH2. It carries out the reaction betaine aldehyde + NAD(+) + H2O = glycine betaine + NADH + 2 H(+). The protein operates within amine and polyamine biosynthesis; betaine biosynthesis via choline pathway; betaine aldehyde from choline (cytochrome c reductase route): step 1/1. Functionally, involved in the biosynthesis of the osmoprotectant glycine betaine. Catalyzes the oxidation of choline to betaine aldehyde and betaine aldehyde to glycine betaine at the same rate. The polypeptide is Oxygen-dependent choline dehydrogenase (Stenotrophomonas maltophilia (strain R551-3)).